The chain runs to 390 residues: GDSL esterase/lipase At1g28640 (390 aa).

An N-terminal signal peptide occupies residues 1–26 (MASSLEKLISSFLLVLYSTTIIVASS). S42 serves as the catalytic Nucleophile. N-linked (GlcNAc...) asparagine glycans are attached at residues N105, N138, and N321. Residues D346 and H349 contribute to the active site. N364 is a glycosylation site (N-linked (GlcNAc...) asparagine).

The protein belongs to the 'GDSL' lipolytic enzyme family.

The protein resides in the secreted. In Arabidopsis thaliana (Mouse-ear cress), this protein is GDSL esterase/lipase At1g28640.